The primary structure comprises 444 residues: Chitinase-like protein Idgf5 (444 aa).

Positions 1–26 (MMWIQKNPFLGLLLCSFLAFFQSTYA) are cleaved as a signal peptide. A GH18 domain is found at 29–444 (GKLVCFYDAQ…PILRSIKFKL (416 aa)). A disulfide bridge links Cys-33 with Cys-60. 2 N-linked (GlcNAc...) asparagine glycosylation sites follow: Asn-289 and Asn-311. Cys-349 and Cys-429 are oxidised to a cystine.

The protein belongs to the glycosyl hydrolase 18 family. IDGF subfamily. In terms of processing, glycosylated.

It localises to the secreted. Probably required to stimulate the proliferation, polarization and motility of imaginal disk cells. May act by stabilizing the binding of insulin-like peptides to its receptor through a simultaneous interaction with both molecules to form a multiprotein signaling complex. This chain is Chitinase-like protein Idgf5 (Idgf5), found in Drosophila melanogaster (Fruit fly).